The following is a 351-amino-acid chain: Probable galacturonosyltransferase-like 4 (351 aa).

Residues 1-8 lie on the Cytoplasmic side of the membrane; sequence MASRSLSY. The chain crosses the membrane as a helical; Signal-anchor for type II membrane protein span at residues 9 to 29; that stretch reads TQLLGLLSFILLLVTTTTMAV. Residues 30–351 lie on the Lumenal side of the membrane; that stretch reads RVGVILHKPS…YRSSRHSLEE (322 aa). 2 N-linked (GlcNAc...) asparagine glycosylation sites follow: asparagine 96 and asparagine 203.

The protein belongs to the glycosyltransferase 8 family.

It localises to the golgi apparatus membrane. The protein operates within glycan metabolism; pectin biosynthesis. Functionally, may be involved in pectin and/or xylans biosynthesis in cell walls. The protein is Probable galacturonosyltransferase-like 4 (GATL4) of Arabidopsis thaliana (Mouse-ear cress).